Reading from the N-terminus, the 275-residue chain is Type III pantothenate kinase (275 aa).

Residue 9–16 coordinates ATP; the sequence is DIGNTRLK. Substrate-binding positions include Tyr114 and 121–124; that span reads GVDR. Catalysis depends on Asp123, which acts as the Proton acceptor. Thr147 is an ATP binding site. Residue Thr209 participates in substrate binding.

The protein belongs to the type III pantothenate kinase family. In terms of assembly, homodimer. NH4(+) is required as a cofactor. K(+) serves as cofactor.

It is found in the cytoplasm. The enzyme catalyses (R)-pantothenate + ATP = (R)-4'-phosphopantothenate + ADP + H(+). It functions in the pathway cofactor biosynthesis; coenzyme A biosynthesis; CoA from (R)-pantothenate: step 1/5. Its function is as follows. Catalyzes the phosphorylation of pantothenate (Pan), the first step in CoA biosynthesis. The protein is Type III pantothenate kinase of Cupriavidus pinatubonensis (strain JMP 134 / LMG 1197) (Cupriavidus necator (strain JMP 134)).